A 417-amino-acid polypeptide reads, in one-letter code: MSSNNVPASRRKCVGVKVGSVMIGGGAPIVVQSMTNTDTADEVSTTQQVAQLALAGSELVRITVNSMEAARAVAGIRARLDDMGCHVPLVGDFHFNGHKLLTAYPECARALAKYRINPGNVGHGRKRDEQFSLLIETACKYDKPVRIGVNWGSLDPEMLARIMDENARSPDPLGASQVMHKALITSALESAARAEELGLARDHIVLSCKVSGVARQQDMIAVYGALAEQCDYALHLGLTEAGMGSKGIVASTAALAVLLFKGIGDTIRVSLTPEPGGDRAREVIVAQEILQTMGLRAFVPLVAACPGCGRTTSTYFQELAESIQIYVREQMVIWREQYEGVENMSLAVMGCVVNGPGESKHADIGISLPGSGETPVAPVFVDGQKTVTLKGDNIAGEFRMIVDEYVRTKYRKKAANA.

The [4Fe-4S] cluster site is built by cysteine 305, cysteine 308, cysteine 351, and glutamate 358.

It belongs to the IspG family. It depends on [4Fe-4S] cluster as a cofactor.

It carries out the reaction (2E)-4-hydroxy-3-methylbut-2-enyl diphosphate + oxidized [flavodoxin] + H2O + 2 H(+) = 2-C-methyl-D-erythritol 2,4-cyclic diphosphate + reduced [flavodoxin]. It participates in isoprenoid biosynthesis; isopentenyl diphosphate biosynthesis via DXP pathway; isopentenyl diphosphate from 1-deoxy-D-xylulose 5-phosphate: step 5/6. In terms of biological role, converts 2C-methyl-D-erythritol 2,4-cyclodiphosphate (ME-2,4cPP) into 1-hydroxy-2-methyl-2-(E)-butenyl 4-diphosphate. The protein is 4-hydroxy-3-methylbut-2-en-1-yl diphosphate synthase (flavodoxin) of Nitrosomonas europaea (strain ATCC 19718 / CIP 103999 / KCTC 2705 / NBRC 14298).